We begin with the raw amino-acid sequence, 700 residues long: MNSYIKNHCYLCITQEKIMTLTYKYSTMDRLLSLHNILKENNVDRLRELIESDKDVINMYDSNRLLPLHIAIEHSDIEIVEMLLDNNAVINGGETIKTHPINIAMILAGGRMMLYNDNKPVKPSKRIRRLLTVNNTEKYTKIVKLLIKHGADLKMVCRSYVLDFYKGGSYCIKTGYAIGYSYFSTIPLCQILWEETKHPSLYYMRRITIKCAIRAVNIELVKHFISNNLLADTDTALEDYFLEAVKTNSPKMVKLFLDSGIDINSTICENSHTALYHAVEQENVTLVMLLLNHGADPDIGDIYSMLKYAIMSSKHGVKLFNILVKNGARIRCCNDILIEAICKRYYSIISYILSLPVNYLPISILCMCIYELRNLPITRKLLKKINDINVSCDACNMYPIHAAVSINTSRLTRLLINKGADVNVRNRYGKTPIHLACMYSKIGNIKVLIKNGANVNERDNYGITPLMICSREGKVSNMEYLLANGADVNQTDYDKNTALTYAIRNKSKECTRVLLEHGADMCFMNRFHTPITIHKTHDNPAVFLAVIYLYFSVINDSSIRNKQGFVRNMRFVNNHKETKSLKDEIENELSIMKDNVFYTGDKKISLYDVLILDKLDDLANTIKRIRRIDLKQIIIFRRFIKKHIKYMEKRNSAIESVLSIINEYTSKDHLSRWWLLSPEIHRVIVSNLSMEDLKTISGYY.

11 ANK repeats span residues 29 to 59 (DRLL…VINM), 63 to 92 (NRLL…VING), 126 to 155 (RIRR…DLKM), 204 to 233 (MRRI…LADT), 236 to 265 (ALED…DINS), 270 to 299 (NSHT…DPDI), 301 to 332 (DIYS…RIRC), 395 to 424 (CNMY…DVNV), 428 to 457 (YGKT…NVNE), 461 to 490 (YGIT…DVNQ), and 494 to 523 (DKNT…DMCF).

This chain is Putative ankyrin repeat protein FPV018, found in Fowlpox virus (strain NVSL) (FPV).